Reading from the N-terminus, the 205-residue chain is Lymphotoxin-alpha (205 aa).

A signal peptide spans 1-34; that stretch reads MTPPGRLYLPRVRGTRLLFLLLGLLLALPPRAKG. One can recognise a THD domain in the interval 63–205; the sequence is PAAHLVGDPS…SSVFFGAFAL (143 aa). Asn-96 carries N-linked (GlcNAc...) asparagine glycosylation. The cysteines at positions 120 and 156 are disulfide-linked.

This sequence belongs to the tumor necrosis factor family. As to quaternary structure, homotrimer, and heterotrimer of either two LTB and one LTA subunits or (less prevalent) two LTA and one LTB subunits. Interacts with TNFRSF14.

It is found in the secreted. Its subcellular location is the membrane. Functionally, cytokine that in its homotrimeric form binds to TNFRSF1A/TNFR1, TNFRSF1B/TNFBR and TNFRSF14/HVEM. In its heterotrimeric form with LTB binds to TNFRSF3/LTBR. Lymphotoxin is produced by lymphocytes and is cytotoxic for a wide range of tumor cells in vitro and in vivo. The protein is Lymphotoxin-alpha (LTA) of Marmota monax (Woodchuck).